We begin with the raw amino-acid sequence, 27 residues long: uncharacterized protein (27 aa).

Residues 3–23 (IILWAVLIIFLIGLLVVTGVF) form a helical membrane-spanning segment.

The protein resides in the cell inner membrane. This is an uncharacterized protein from Escherichia coli (strain K12).